The chain runs to 105 residues: Large ribosomal subunit protein uL24 (105 aa).

The segment at 1–25 is disordered; the sequence is MHIKKGDNVKVIAGKDKGKEGKVVS.

This sequence belongs to the universal ribosomal protein uL24 family. As to quaternary structure, part of the 50S ribosomal subunit.

Its function is as follows. One of two assembly initiator proteins, it binds directly to the 5'-end of the 23S rRNA, where it nucleates assembly of the 50S subunit. One of the proteins that surrounds the polypeptide exit tunnel on the outside of the subunit. In Staphylococcus saprophyticus subsp. saprophyticus (strain ATCC 15305 / DSM 20229 / NCIMB 8711 / NCTC 7292 / S-41), this protein is Large ribosomal subunit protein uL24.